A 146-amino-acid chain; its full sequence is MLVVLLLIGMAAHSSLIVIAACILLILKLTNVNFIFSLLERRGLEMGLTFLLLSILVPLASGKASWQEIISSLASFSGLLAVAGGALATSLNTRGLNLLKADPEIVFGLLLGSILGIVFLHGIPVGPLMAAGITALLMQLARIFKP.

4 helical membrane passes run 6 to 26, 46 to 66, 69 to 89, and 105 to 125; these read LLIGMAAHSSLIVIAACILLI, MGLTFLLLSILVPLASGKASW, IISSLASFSGLLAVAGGALAT, and IVFGLLLGSILGIVFLHGIPV.

The protein belongs to the UPF0756 family.

Its subcellular location is the cell membrane. This Pelotomaculum thermopropionicum (strain DSM 13744 / JCM 10971 / SI) protein is UPF0756 membrane protein PTH_1817.